Here is a 138-residue protein sequence, read N- to C-terminus: Small ribosomal subunit protein uS11c (138 aa).

The disordered stretch occupies residues 1-22 (MAKPIPRIGSQRNRRINSRKNA). A compositionally biased stretch (basic residues) spans 12–22 (RNRRINSRKNA).

Belongs to the universal ribosomal protein uS11 family. As to quaternary structure, part of the 30S ribosomal subunit.

It is found in the plastid. It localises to the chloroplast. In Fagopyrum esculentum subsp. ancestrale (Wild buckwheat), this protein is Small ribosomal subunit protein uS11c.